The chain runs to 273 residues: Undecaprenyl-diphosphatase (273 aa).

8 helical membrane passes run 4 to 24 (MELW…FAPV), 48 to 68 (AANT…VVVF), 89 to 109 (LNLI…VLFE), 116 to 136 (LFST…MIAA), 152 to 172 (ITYK…WPGF), 193 to 213 (ADFT…LSLL), 222 to 242 (ADIP…LLAI), and 252 to 272 (IRLV…YFLY).

Belongs to the UppP family.

The protein resides in the cell membrane. It carries out the reaction di-trans,octa-cis-undecaprenyl diphosphate + H2O = di-trans,octa-cis-undecaprenyl phosphate + phosphate + H(+). Functionally, catalyzes the dephosphorylation of undecaprenyl diphosphate (UPP). Confers resistance to bacitracin. The chain is Undecaprenyl-diphosphatase from Geobacillus kaustophilus (strain HTA426).